We begin with the raw amino-acid sequence, 135 residues long: Gene 52 protein (135 aa).

2 disordered regions span residues 1–20 and 110–135; these read MASGGGGGSKRCPKKQPTPE and LGGRASSDSSKASKPRGRSKHRAEKQ. The span at 122–135 shows a compositional bias: basic residues; it reads SKPRGRSKHRAEKQ.

Belongs to the herpesviridae BLRF2 family.

This Equine herpesvirus 2 (strain 86/87) (EHV-2) protein is Gene 52 protein (52).